The sequence spans 281 residues: Putative phosphatase/phosphodiesterase MG246 (281 aa).

Residues Asp11, Glu42, Asn43, and Asn70 each coordinate Fe cation. His71 acts as the Proton donor in catalysis. The Fe cation site is built by His157, His182, and His184.

The protein belongs to the YmdB-like family. Fe(3+) is required as a cofactor.

This Mycoplasma genitalium (strain ATCC 33530 / DSM 19775 / NCTC 10195 / G37) (Mycoplasmoides genitalium) protein is Putative phosphatase/phosphodiesterase MG246.